We begin with the raw amino-acid sequence, 614 residues long: Numb-like protein (614 aa).

Disordered regions lie at residues 1-68, 223-283, 371-420, 448-468, and 539-614; these read MSRS…QWQA, GSFR…PVAA, FASA…LEEV, QQQQ…LQPF, and LGKA…EIEL. The 150-residue stretch at 74–223 folds into the PID domain; it reads RKGTCSFPVR…ASRTSFAREG (150 aa). Phosphoserine is present on residues Ser-224 and Ser-228. A compositionally biased stretch (basic and acidic residues) spans 233-245; the sequence is PAEREAGDKKKAE. Residues 246-260 show a composition bias toward low complexity; the sequence is AAAAPAVAPGPAQPG. Position 263 is a phosphoserine (Ser-263). Phosphothreonine is present on Thr-279. The segment covering 371–390 has biased composition (low complexity); that stretch reads FASAGAPVPGPPSATTGTSA. A compositionally biased stretch (basic and acidic residues) spans 409 to 418; that stretch reads TPSEAERWLE. Ser-411 carries the phosphoserine modification. Positions 563–578 are enriched in pro residues; the sequence is NGAPWPPEPAPAPAPE.

As to quaternary structure, associates with EPS15 and NOTCH1. Interacts (via PTB domain) with MAP3K7IP2 (via C-terminal). Interacts (via C-terminal) with TRAF6 (via TRAF domains).

The protein resides in the cytoplasm. Plays a role in the process of neurogenesis. Required throughout embryonic neurogenesis to maintain neural progenitor cells, also called radial glial cells (RGCs), by allowing their daughter cells to choose progenitor over neuronal cell fate. Not required for the proliferation of neural progenitor cells before the onset of embryonic neurogenesis. Also required postnatally in the subventricular zone (SVZ) neurogenesis by regulating SVZ neuroblasts survival and ependymal wall integrity. Negative regulator of NF-kappa-B signaling pathway. The inhibition of NF-kappa-B activation is mediated at least in part, by preventing MAP3K7IP2 to interact with polyubiquitin chains of TRAF6 and RIPK1 and by stimulating the 'Lys-48'-linked polyubiquitination and degradation of TRAF6 in cortical neurons. This Rattus norvegicus (Rat) protein is Numb-like protein (Numbl).